Here is a 335-residue protein sequence, read N- to C-terminus: MVEMFYDKDADLGALKGKIIAVMGYGSQGHAQAQNLHDSGLDVVIGLREGSRRWKQAEDDGLKVMTVADAAKAADVVQILLPDEIQSKVYYSEIEPGLEAGNSLVFSHGFNIHYNQIVPSKDLDVYMVAPKSPGHLVRRTYKEGAGVPGLIAVYQDASGNALEMALAHAKGVGCTRAGVIETTFREETETDLFGEQVDLCGGVASLIKTSFEVLVEAGYQPEMAYFETLHELKLIVDLIHEGGLEKMWYSVSNTAEYGGLTVGPQIINEESREAMYVALERIQNGEFAREFVLEGQTNHAVLTSMERLEKEHPVEVVGKKLRAMMPWLNSELNEE.

The 181-residue stretch at valine 2–threonine 182 folds into the KARI N-terminal Rossmann domain. NADP(+) is bound by residues tyrosine 25–glutamine 28, arginine 48, serine 51, and aspartate 83–glutamine 86. Residue histidine 108 is part of the active site. Glycine 134 lines the NADP(+) pocket. The KARI C-terminal knotted domain occupies threonine 183 to leucine 328. Aspartate 191, glutamate 195, glutamate 227, and glutamate 231 together coordinate Mg(2+). Position 252 (serine 252) interacts with substrate.

This sequence belongs to the ketol-acid reductoisomerase family. It depends on Mg(2+) as a cofactor.

The catalysed reaction is (2R)-2,3-dihydroxy-3-methylbutanoate + NADP(+) = (2S)-2-acetolactate + NADPH + H(+). It carries out the reaction (2R,3R)-2,3-dihydroxy-3-methylpentanoate + NADP(+) = (S)-2-ethyl-2-hydroxy-3-oxobutanoate + NADPH + H(+). Its pathway is amino-acid biosynthesis; L-isoleucine biosynthesis; L-isoleucine from 2-oxobutanoate: step 2/4. It participates in amino-acid biosynthesis; L-valine biosynthesis; L-valine from pyruvate: step 2/4. Its function is as follows. Involved in the biosynthesis of branched-chain amino acids (BCAA). Catalyzes an alkyl-migration followed by a ketol-acid reduction of (S)-2-acetolactate (S2AL) to yield (R)-2,3-dihydroxy-isovalerate. In the isomerase reaction, S2AL is rearranged via a Mg-dependent methyl migration to produce 3-hydroxy-3-methyl-2-ketobutyrate (HMKB). In the reductase reaction, this 2-ketoacid undergoes a metal-dependent reduction by NADPH to yield (R)-2,3-dihydroxy-isovalerate. In Methanococcoides burtonii (strain DSM 6242 / NBRC 107633 / OCM 468 / ACE-M), this protein is Ketol-acid reductoisomerase (NADP(+)).